Here is a 257-residue protein sequence, read N- to C-terminus: uncharacterized protein (257 aa).

Disordered regions lie at residues 1–164 (MERS…AGAC) and 225–257 (TAWS…RARA). The span at 10–28 (CGEEPRSGSRRLPKAEGDK) shows a compositional bias: basic and acidic residues. Residues 54-65 (RPNRASGRRRRS) are compositionally biased toward basic residues. Residues 125-139 (RPTPRPCAGPAPPPA) show a composition bias toward pro residues. Residues 144-162 (RCRRPRRWPRAGRRGRRAG) are compositionally biased toward basic residues.

This is an uncharacterized protein from Homo sapiens (Human).